A 130-amino-acid polypeptide reads, in one-letter code: Small ribosomal subunit protein uS9 (130 aa).

It belongs to the universal ribosomal protein uS9 family.

In Syntrophobacter fumaroxidans (strain DSM 10017 / MPOB), this protein is Small ribosomal subunit protein uS9.